Consider the following 416-residue polypeptide: Glutamyl-tRNA reductase (416 aa).

Substrate is bound by residues 49 to 52, serine 105, 110 to 112, and glutamine 116; these read TCNR and EPQ. Residue cysteine 50 is the Nucleophile of the active site. Residue 185–190 participates in NADP(+) binding; that stretch reads GAGETI.

The protein belongs to the glutamyl-tRNA reductase family. In terms of assembly, homodimer.

It carries out the reaction (S)-4-amino-5-oxopentanoate + tRNA(Glu) + NADP(+) = L-glutamyl-tRNA(Glu) + NADPH + H(+). The protein operates within porphyrin-containing compound metabolism; protoporphyrin-IX biosynthesis; 5-aminolevulinate from L-glutamyl-tRNA(Glu): step 1/2. Its function is as follows. Catalyzes the NADPH-dependent reduction of glutamyl-tRNA(Glu) to glutamate 1-semialdehyde (GSA). The chain is Glutamyl-tRNA reductase from Shewanella amazonensis (strain ATCC BAA-1098 / SB2B).